The primary structure comprises 263 residues: Tryptophan 2,3-dioxygenase (263 aa).

Substrate-binding positions include 32–36, Tyr94, and Arg98; that span reads FIVIH. His221 lines the heme pocket. Substrate is bound at residue Thr235.

It belongs to the tryptophan 2,3-dioxygenase family. As to quaternary structure, homotetramer. Heme is required as a cofactor.

It catalyses the reaction L-tryptophan + O2 = N-formyl-L-kynurenine. It participates in amino-acid degradation; L-tryptophan degradation via kynurenine pathway; L-kynurenine from L-tryptophan: step 1/2. In terms of biological role, heme-dependent dioxygenase that catalyzes the oxidative cleavage of the L-tryptophan (L-Trp) pyrrole ring and converts L-tryptophan to N-formyl-L-kynurenine. Catalyzes the oxidative cleavage of the indole moiety. The chain is Tryptophan 2,3-dioxygenase from Caulobacter vibrioides (strain ATCC 19089 / CIP 103742 / CB 15) (Caulobacter crescentus).